Consider the following 637-residue polypeptide: Poly(A) polymerase beta (637 aa).

Residues 1–10 (MMPFPVTTQG) show a composition bias toward low complexity. The disordered stretch occupies residues 1-23 (MMPFPVTTQGPPQPAPPPNRYGV). Residues 101–103 (FGS), Thr-110, 114–116 (DID), Asp-168, Lys-229, Tyr-238, and 247–248 (GV) each bind ATP. Mg(2+) is bound by residues Asp-114, Asp-116, and Asp-168. The tract at residues 535–555 (SVPSSTSTMKTGPLISSSQGR) is disordered.

This sequence belongs to the poly(A) polymerase family. In terms of assembly, interacts with GSG1. Requires Mg(2+) as cofactor. Mn(2+) serves as cofactor. In terms of tissue distribution, testis specific.

The protein localises to the nucleus. The catalysed reaction is RNA(n) + ATP = RNA(n)-3'-adenine ribonucleotide + diphosphate. This is Poly(A) polymerase beta from Homo sapiens (Human).